A 211-amino-acid chain; its full sequence is Germin-like protein subfamily 3 member 3 (211 aa).

A signal peptide spans 1–20; the sequence is MKMIIQIFFIISLISTISFA. The cysteines at positions 26 and 41 are disulfide-linked. The Cupin type-1 domain occupies 55–201; that stretch reads TGLGTAGNTS…TTFLSDAEVK (147 aa). Asn62 carries N-linked (GlcNAc...) asparagine glycosylation. Residues His103, His105, and Glu110 each contribute to the Mn(2+) site. Ser140 carries the post-translational modification Phosphoserine. His149 provides a ligand contact to Mn(2+).

It belongs to the germin family. Oligomer (believed to be a pentamer but probably hexamer). As to expression, expressed in leaves and flowers.

It localises to the secreted. The protein resides in the extracellular space. The protein localises to the apoplast. Functionally, may play a role in plant defense. Probably has no oxalate oxidase activity even if the active site is conserved. This chain is Germin-like protein subfamily 3 member 3 (GER3), found in Arabidopsis thaliana (Mouse-ear cress).